The following is a 156-amino-acid chain: Small ribosomal subunit protein uS7 (156 aa).

Belongs to the universal ribosomal protein uS7 family. In terms of assembly, part of the 30S ribosomal subunit. Contacts proteins S9 and S11.

One of the primary rRNA binding proteins, it binds directly to 16S rRNA where it nucleates assembly of the head domain of the 30S subunit. Is located at the subunit interface close to the decoding center, probably blocks exit of the E-site tRNA. In Rhodopseudomonas palustris (strain BisB5), this protein is Small ribosomal subunit protein uS7.